The chain runs to 527 residues: Neutrophil cytosol factor 2 (527 aa).

TPR repeat units lie at residues 37 to 70 (SRIC…DKHL), 71 to 104 (AVSY…LRGN), and 121 to 154 (CEVL…KSEP). Thr233 is modified (phosphothreonine). The region spanning 240–299 (LEGEAHRVLFGFVPETPEELQVMPGNIVFVLKKGNDNWATVMFNGQKGLVPCNYLEPVEL) is the SH3 1 domain. Residues 304–345 (QQQPQEETSLESDIPAPPSSSAPGRPQLSPGQKGKEEPKQEI) form a disordered region. A Phosphoserine modification is found at Ser324. Residues 336 to 345 (KGKEEPKQEI) show a composition bias toward basic and acidic residues. Positions 352–430 (SYTLKVHYKY…YCLTLWCENT (79 aa)) constitute a PB1 domain. A Phosphoserine modification is found at Ser400. Residues 434 to 457 (QGFPDEPEESKKSDANNQTTEPEL) form a disordered region. The 60-residue stretch at 458–517 (KEGSKVVALFSYEATQPEDLEFLEGDVILVISTVNEQWLEGECKGKVGIFPKAFVEQHPT) folds into the SH3 2 domain.

It belongs to the NCF2/NOXA1 family. As to quaternary structure, component of the phagocyte NADPH oxidase complex composed of an obligatory core heterodimer formed by the membrane proteins CYBA and CYBB and the cytosolic regulatory subunits NCF1/p47-phox, NCF2/p67-phox, NCF4/p40-phox and the small GTPase RAC1 or RAC2. Part of a cytosolic complex composed at least by NCF1, NCF2 and NCF4. Interacts with NCF4. Interacts (via the C-terminal SH3 domain) with NCF1 (via C-terminus). Interacts with SYTL1 and RAC1. May interact with NOXO1. Interacts with S100A8 and calprotectin (S100A8/9). Interacts with GBP7 (via GB1/RHD3-type G domain). Interacts with CYBB; the interaction is enhanced in the presence of GBP7.

It is found in the cytoplasm. Subunit of the phagocyte NADPH oxidase complex that mediates the transfer of electrons from cytosolic NADPH to O2 to produce the superoxide anion (O2(-)). In the activated complex, electrons are first transferred from NADPH to flavin adenine dinucleotide (FAD) and subsequently transferred via two heme molecules to molecular oxygen, producing superoxide through an outer-sphere reaction. Activation of the NADPH oxidase complex is initiated by the assembly of cytosolic subunits of the NADPH oxidase complex with the core NADPH oxidase complex to form a complex at the plasma membrane or phagosomal membrane. This activation process is initiated by phosphorylation dependent binding of the cytosolic NCF1/p47-phox subunit to the C-terminus of CYBA/p22-phox. The protein is Neutrophil cytosol factor 2 of Bos taurus (Bovine).